A 326-amino-acid polypeptide reads, in one-letter code: Isopenicillin N synthase (326 aa).

Isopenicillin N-binding residues include R84, Y88, and Y186. Positions 84, 88, 186, 209, and 211 each coordinate N-[(5S)-5-amino-5-carboxypentanoyl]-L-cysteinyl-D-valine. The Fe2OG dioxygenase domain maps to 183-283 (LIRYPFLENY…RLSIPFFANL (101 aa)). Positions 209, 211, and 265 each coordinate Fe(2+). R274 serves as a coordination point for 2-oxoglutarate. Position 276 (S276) interacts with isopenicillin N. S276 is a binding site for N-[(5S)-5-amino-5-carboxypentanoyl]-L-cysteinyl-D-valine.

It belongs to the iron/ascorbate-dependent oxidoreductase family. Requires Fe cation as cofactor. The cofactor is L-ascorbate.

It carries out the reaction N-[(5S)-5-amino-5-carboxypentanoyl]-L-cysteinyl-D-valine + O2 = isopenicillin N + 2 H2O. Its pathway is antibiotic biosynthesis; penicillin G biosynthesis; penicillin G from L-alpha-aminoadipate and L-cysteine and L-valine: step 2/3. In terms of biological role, removes, in the presence of oxygen, 4 hydrogen atoms from delta-L-(alpha-aminoadipyl)-L-cysteinyl-D-valine (ACV) to form the azetidinone and thiazolidine rings of isopenicillin. This is Isopenicillin N synthase (pcbC) from Lysobacter lactamgenus.